The following is a 362-amino-acid chain: Prostaglandin F2-alpha receptor (362 aa).

Residues 1–31 (MSTNSSIQPVSPESELLSNTTCQLEEDLSIS) lie on the Extracellular side of the membrane. Residues asparagine 4 and asparagine 19 are each glycosylated (N-linked (GlcNAc...) asparagine). The helical transmembrane segment at 32–54 (FSIIFMTVGILSNSLAIAILMKA) threads the bilayer. Residues 55–69 (YQRFRQKYKSSFLLL) lie on the Cytoplasmic side of the membrane. A helical transmembrane segment spans residues 70-90 (ASALVITDFFGHLINGTIAVF). At 91–109 (VYASDKDWIYFDKSNILCS) the chain is on the extracellular side. Cysteines 108 and 186 form a disulfide. A helical transmembrane segment spans residues 110–131 (IFGICMVFSGLCPLFLGSLMAI). Over 132–152 (ERCIGVTKPIFHSTKITTKHV) the chain is Cytoplasmic. A helical membrane pass occupies residues 153–175 (KMMLSGVCFFAVFVALLPILGHR). The Extracellular portion of the chain corresponds to 176-198 (DYKIQASRTWCFYKTDEIKDWED). Residues 199–224 (RFYLLLFAFLGLLALGISFVCNAITG) form a helical membrane-spanning segment. The Cytoplasmic portion of the chain corresponds to 225-250 (ISLLKVKFRSQQHRQGRSHHFEMVIQ). The helical transmembrane segment at 251–267 (LLGIMCVSCICWSPFLV) threads the bilayer. The Extracellular segment spans residues 268 to 285 (TMASIGMNIQDFKDSCER). A helical transmembrane segment spans residues 286-307 (TLFTLRMATWNQILDPWVYILL). Residues 308–362 (RKAVLRNLYVCTRRCCGVHVISLHVWELSSIKDSLKVAAISDLPVTEKVTQQTST) are Cytoplasmic-facing.

The protein belongs to the G-protein coupled receptor 1 family.

The protein localises to the cell membrane. Receptor for prostaglandin F2-alpha (PGF2-alpha). The activity of this receptor is mediated by G proteins which activate a phosphatidylinositol-calcium second messenger system. Initiates luteolysis in the corpus luteum. The protein is Prostaglandin F2-alpha receptor (PTGFR) of Bos taurus (Bovine).